Reading from the N-terminus, the 249-residue chain is Probable transcriptional regulatory protein MXAN_4974 (249 aa).

This sequence belongs to the TACO1 family.

The protein localises to the cytoplasm. This Myxococcus xanthus (strain DK1622) protein is Probable transcriptional regulatory protein MXAN_4974.